Consider the following 479-residue polypeptide: Glutamyl-tRNA(Gln) amidotransferase subunit A (479 aa).

Catalysis depends on charge relay system residues lysine 75 and serine 150. The active-site Acyl-ester intermediate is the serine 174.

It belongs to the amidase family. GatA subfamily. In terms of assembly, heterotrimer of A, B and C subunits.

The enzyme catalyses L-glutamyl-tRNA(Gln) + L-glutamine + ATP + H2O = L-glutaminyl-tRNA(Gln) + L-glutamate + ADP + phosphate + H(+). Functionally, allows the formation of correctly charged Gln-tRNA(Gln) through the transamidation of misacylated Glu-tRNA(Gln) in organisms which lack glutaminyl-tRNA synthetase. The reaction takes place in the presence of glutamine and ATP through an activated gamma-phospho-Glu-tRNA(Gln). In Synechococcus sp. (strain ATCC 27144 / PCC 6301 / SAUG 1402/1) (Anacystis nidulans), this protein is Glutamyl-tRNA(Gln) amidotransferase subunit A.